An 82-amino-acid polypeptide reads, in one-letter code: UPF0729 protein C18orf32 homolog (82 aa).

The necessary for its localzation to the endoplasmic reticulum and lipid droplets stretch occupies residues 1–37 (MVCIPCIVIPVLLWVYKKFLEPIVYPFISPIINRIWP). The interval 46–82 (TSAKKEESNGTCKASGTSITNGSVSRGEEAVPDKKTD) is disordered. The span at 54-69 (NGTCKASGTSITNGSV) shows a compositional bias: polar residues. Over residues 71–82 (RGEEAVPDKKTD) the composition is skewed to basic and acidic residues.

Belongs to the UPF0729 family.

Its subcellular location is the endoplasmic reticulum. It localises to the lipid droplet. The polypeptide is UPF0729 protein C18orf32 homolog (Xenopus tropicalis (Western clawed frog)).